Here is a 447-residue protein sequence, read N- to C-terminus: T-box transcription factor TBX20 (447 aa).

Positions 62 to 81 are disordered; the sequence is DAHGEFGGGSGSSPSSSSLC. The T-box DNA-binding region spans 109-288; that stretch reads LWDKFHELGT…SNPFAKGFRD (180 aa). A disordered region spans residues 316–340; it reads TYGGEEDVLGDESQTTPNRGSAFTT. A compositionally biased stretch (polar residues) spans 327–340; that stretch reads ESQTTPNRGSAFTT.

The protein localises to the nucleus. Acts as a transcriptional activator and repressor required for cardiac development and may have key roles in the maintenance of functional and structural phenotypes in adult heart. The protein is T-box transcription factor TBX20 (TBX20) of Homo sapiens (Human).